The following is a 370-amino-acid chain: tRNA N6-adenosine threonylcarbamoyltransferase (370 aa).

Fe cation-binding residues include H122 and H126. Substrate is bound by residues 153–157, D186, G199, and N298; that span reads LLSGG. A Fe cation-binding site is contributed by D326.

The protein belongs to the KAE1 / TsaD family. Requires Fe(2+) as cofactor.

Its subcellular location is the cytoplasm. The catalysed reaction is L-threonylcarbamoyladenylate + adenosine(37) in tRNA = N(6)-L-threonylcarbamoyladenosine(37) in tRNA + AMP + H(+). Required for the formation of a threonylcarbamoyl group on adenosine at position 37 (t(6)A37) in tRNAs that read codons beginning with adenine. Is involved in the transfer of the threonylcarbamoyl moiety of threonylcarbamoyl-AMP (TC-AMP) to the N6 group of A37, together with TsaE and TsaB. TsaD likely plays a direct catalytic role in this reaction. This is tRNA N6-adenosine threonylcarbamoyltransferase from Granulibacter bethesdensis (strain ATCC BAA-1260 / CGDNIH1).